The primary structure comprises 318 residues: Taste receptor type 2 member 7 (318 aa).

Residues 1 to 9 (MADKVQTTL) lie on the Extracellular side of the membrane. A helical membrane pass occupies residues 10–30 (LFLAVGEFSVGILGNAFIGLV). The Cytoplasmic segment spans residues 31–55 (NCMDWVKKRKIASIDLILTSLAISR). A helical membrane pass occupies residues 56 to 76 (ICLLCIILLDCFTLVLYPDVY). Topologically, residues 77-94 (ATGKEMRIIDFFWTLTNH) are extracellular. A helical transmembrane segment spans residues 95–115 (LSIWFATCLSIYYFFKIGNFF). Topologically, residues 116–128 (HPLFLWMKWRIDR) are cytoplasmic. A helical transmembrane segment spans residues 129–149 (VISWILLGCVVLSVFISLPAT). The Extracellular segment spans residues 150–187 (ENLNADFRFCVKAKRKTNLTWSCRVNKTQHASTKLFLN). N-linked (GlcNAc...) asparagine glycosylation is found at N167 and N175. The helical transmembrane segment at 188-208 (LATLLPFCVCLMSFFLLILSL) threads the bilayer. Over 209–235 (RRHIRRMQLSATGCRDPSTEAHVRALK) the chain is Cytoplasmic. Residues 236–256 (AVISFLLLFIAYYLSFLIATS) traverse the membrane as a helical segment. The Extracellular portion of the chain corresponds to 257 to 266 (SYFMPETELA). The chain crosses the membrane as a helical span at residues 267–287 (VIFGESIALIYPSSHSFILIL). At 288-318 (GNNKLRYVSLKVIWKVMSILKGRKFQQHKQI) the chain is on the cytoplasmic side.

It belongs to the G-protein coupled receptor T2R family.

Its subcellular location is the membrane. Its function is as follows. Gustducin-coupled receptor implicated in the perception of bitter compounds in the oral cavity and the gastrointestinal tract. Signals through PLCB2 and the calcium-regulated cation channel TRPM5. The sequence is that of Taste receptor type 2 member 7 (TAS2R7) from Gorilla gorilla gorilla (Western lowland gorilla).